Here is a 160-residue protein sequence, read N- to C-terminus: Cyclic pyranopterin monophosphate synthase (160 aa).

Substrate contacts are provided by residues 74-76 (LSH) and 112-113 (ME). Residue D127 is part of the active site.

Belongs to the MoaC family. In terms of assembly, homohexamer; trimer of dimers.

It catalyses the reaction (8S)-3',8-cyclo-7,8-dihydroguanosine 5'-triphosphate = cyclic pyranopterin phosphate + diphosphate. It functions in the pathway cofactor biosynthesis; molybdopterin biosynthesis. Its function is as follows. Catalyzes the conversion of (8S)-3',8-cyclo-7,8-dihydroguanosine 5'-triphosphate to cyclic pyranopterin monophosphate (cPMP). The polypeptide is Cyclic pyranopterin monophosphate synthase (Geobacter metallireducens (strain ATCC 53774 / DSM 7210 / GS-15)).